We begin with the raw amino-acid sequence, 276 residues long: NH(3)-dependent NAD(+) synthetase (276 aa).

43 to 50 (GISGGVDS) contributes to the ATP binding site. A Mg(2+)-binding site is contributed by Asp-49. Arg-146 is a deamido-NAD(+) binding site. Thr-166 contributes to the ATP binding site. Glu-171 contributes to the Mg(2+) binding site. Residues Lys-179 and Asp-186 each coordinate deamido-NAD(+). ATP-binding residues include Lys-195 and Thr-217. Residue 266–267 (HK) participates in deamido-NAD(+) binding.

Belongs to the NAD synthetase family. As to quaternary structure, homodimer.

The catalysed reaction is deamido-NAD(+) + NH4(+) + ATP = AMP + diphosphate + NAD(+) + H(+). It functions in the pathway cofactor biosynthesis; NAD(+) biosynthesis; NAD(+) from deamido-NAD(+) (ammonia route): step 1/1. Catalyzes the ATP-dependent amidation of deamido-NAD to form NAD. Uses ammonia as a nitrogen source. In Shewanella putrefaciens (strain CN-32 / ATCC BAA-453), this protein is NH(3)-dependent NAD(+) synthetase.